Reading from the N-terminus, the 435-residue chain is Serine hydroxymethyltransferase (435 aa).

Residues Leu133 and 137–139 (GHL) each bind (6S)-5,6,7,8-tetrahydrofolate. The residue at position 242 (Lys242) is an N6-(pyridoxal phosphate)lysine.

This sequence belongs to the SHMT family. As to quaternary structure, homodimer. Requires pyridoxal 5'-phosphate as cofactor.

It localises to the cytoplasm. The catalysed reaction is (6R)-5,10-methylene-5,6,7,8-tetrahydrofolate + glycine + H2O = (6S)-5,6,7,8-tetrahydrofolate + L-serine. It participates in one-carbon metabolism; tetrahydrofolate interconversion. Its pathway is amino-acid biosynthesis; glycine biosynthesis; glycine from L-serine: step 1/1. Functionally, catalyzes the reversible interconversion of serine and glycine with tetrahydrofolate (THF) serving as the one-carbon carrier. This reaction serves as the major source of one-carbon groups required for the biosynthesis of purines, thymidylate, methionine, and other important biomolecules. Also exhibits THF-independent aldolase activity toward beta-hydroxyamino acids, producing glycine and aldehydes, via a retro-aldol mechanism. The protein is Serine hydroxymethyltransferase of Sphingopyxis alaskensis (strain DSM 13593 / LMG 18877 / RB2256) (Sphingomonas alaskensis).